Reading from the N-terminus, the 151-residue chain is RNA polymerase-binding transcription factor DksA (151 aa).

Residues 33-54 (NEAQLAHFRRILEAWRNQLRDE) are a coiled coil. Positions 114, 117, 135, and 138 each coordinate Zn(2+). A dksA C4-type zinc finger spans residues 114 to 138 (CESCGVEIGIRRLEARPTADLCIDC).

This sequence belongs to the DksA family. Interacts directly with the RNA polymerase.

Its subcellular location is the cytoplasm. Functionally, transcription factor that acts by binding directly to the RNA polymerase (RNAP). Required for negative regulation of rRNA expression and positive regulation of several amino acid biosynthesis promoters. Also required for regulation of fis expression. This chain is RNA polymerase-binding transcription factor DksA, found in Escherichia coli O157:H7.